The chain runs to 389 residues: uncharacterized protein (389 aa).

Residues 1-29 (MQPSFTPSGGKWLSIAVILLVIGLVVGFA) form the signal peptide.

It belongs to the bacterial solute-binding protein 1 family. WtpA subfamily.

This is an uncharacterized protein from Thermoplasma volcanium (strain ATCC 51530 / DSM 4299 / JCM 9571 / NBRC 15438 / GSS1).